Consider the following 600-residue polypeptide: MFNTRANKASDQSPTIPTESATLAELWERTVRSRPSSPAIVTNGETLSYDEVNARANRLARLLLDEGAGPGRLVALALPRSSHLVISVLAVAKAGAVFLPLDVNHPRERLSYQLADARPALLCTVRSAAARLPDGIEMPRVLLDSPERTAVLDALPDTDLTDDERGGPLAATDLAYVIYTSGSTGRPKGVALTGAGLPALAAAKVAAMRVTGDSRVLQFASPGFDAYLTELLAAFTAGATLVVPGTDTLAGDPLRRALRDGRVSHAVLPPAAVATMSPDAVPDLRVLVVAGEACPAGLVERWAPGRLLINAYGPTECTVCATMTGPLTPTDEVTIGRPIPGVSVYILDAERRPAAPGEIGELYLSGAGLAQGYLNSPDLTAQMFVPNPFAADGERMYRTGDLASRRADGDILFHGRIDDQVELRGFRVELGEVESVLSQHPDVAQAVAALWTDPAEGPQLVTYVVPAPGTTPSAGELREHAGRFLPDFMVPSAFTTIDAVPLTPGGKTDRAGLPDPVKATQPAGLGPRTPAEKVLCDIFRDLFDLVEIDVRSNFFEMGGNSILAVDLIQRAQEAGLTLMPRTVIDHPTIEQLAAIATLEE.

The disordered stretch occupies residues G505–G526. Positions G526–E600 constitute a Carrier domain. O-(pantetheine 4'-phosphoryl)serine is present on S561.

It belongs to the ATP-dependent AMP-binding enzyme family.

It functions in the pathway antibiotic biosynthesis; novobiocin biosynthesis. Together with NovI, involved in the formation of a beta-OH-Tyr intermediate in the novobiocin biosynthesis pathway, an aminocoumarin family antibiotic that targets bacterial DNA gyrases. The ATP-dependent AMP-binding region activates L-Tyr as L-tyrosyl-AMP and then transfers the L-tyrosyl group to the acyl carrier domain through thioester formation to form a tyrosyl-S intermediate that is covalently tethered to NovH (L-Tyr-S-NovH). This chain is Novobiocin biosynthesis protein H (novH), found in Streptomyces niveus (Streptomyces spheroides).